The following is a 170-amino-acid chain: UPF0161 protein At3g09310 (170 aa).

Disordered stretches follow at residues 49-70 and 147-170; these read CLSA…GEEL and SGIK…QRKI. Acidic residues predominate over residues 154–170; the sequence is GDEEEEDNYDDEDQRKI.

The protein belongs to the UPF0161 family.

The protein is UPF0161 protein At3g09310 of Arabidopsis thaliana (Mouse-ear cress).